The following is a 117-amino-acid chain: Ribosome-binding factor A (117 aa).

It belongs to the RbfA family. In terms of assembly, monomer. Binds 30S ribosomal subunits, but not 50S ribosomal subunits or 70S ribosomes.

The protein resides in the cytoplasm. Its function is as follows. One of several proteins that assist in the late maturation steps of the functional core of the 30S ribosomal subunit. Associates with free 30S ribosomal subunits (but not with 30S subunits that are part of 70S ribosomes or polysomes). Required for efficient processing of 16S rRNA. May interact with the 5'-terminal helix region of 16S rRNA. The chain is Ribosome-binding factor A from Petrotoga mobilis (strain DSM 10674 / SJ95).